A 323-amino-acid chain; its full sequence is GMP reductase (323 aa).

Cys-174 (thioimidate intermediate) is an active-site residue. 203-226 (IIADGGIRHNGDIAKSVRFGASMV) is a binding site for NADP(+).

Belongs to the IMPDH/GMPR family. GuaC type 2 subfamily.

It catalyses the reaction IMP + NH4(+) + NADP(+) = GMP + NADPH + 2 H(+). Functionally, catalyzes the irreversible NADPH-dependent deamination of GMP to IMP. It functions in the conversion of nucleobase, nucleoside and nucleotide derivatives of G to A nucleotides, and in maintaining the intracellular balance of A and G nucleotides. The sequence is that of GMP reductase from Oenococcus oeni (strain ATCC BAA-331 / PSU-1).